Here is a 141-residue protein sequence, read N- to C-terminus: Ribonuclease VapC16 (141 aa).

Asp-99 contributes to the Mg(2+) binding site. The tract at residues 99 to 141 is disordered; sequence DHAHTAHRRASGSPSTSIRPCAHRPGTAAWPDDHHRRRPVSCL.

The protein belongs to the PINc/VapC protein family. The cofactor is Mg(2+).

Functionally, toxic component of a type II toxin-antitoxin (TA) system. An RNase. The cognate antitoxin is VapB16. The sequence is that of Ribonuclease VapC16 from Mycobacterium tuberculosis (strain ATCC 25618 / H37Rv).